Here is a 509-residue protein sequence, read N- to C-terminus: Lysine--tRNA ligase (509 aa).

Mg(2+) is bound by residues Glu418 and Glu425.

This sequence belongs to the class-II aminoacyl-tRNA synthetase family. Homodimer. Mg(2+) is required as a cofactor.

The protein localises to the cytoplasm. It catalyses the reaction tRNA(Lys) + L-lysine + ATP = L-lysyl-tRNA(Lys) + AMP + diphosphate. In Acinetobacter baumannii (strain ATCC 17978 / DSM 105126 / CIP 53.77 / LMG 1025 / NCDC KC755 / 5377), this protein is Lysine--tRNA ligase.